The chain runs to 60 residues: UPF0434 protein NMA0874 (60 aa).

This sequence belongs to the UPF0434 family.

This is UPF0434 protein NMA0874 from Neisseria meningitidis serogroup A / serotype 4A (strain DSM 15465 / Z2491).